The sequence spans 566 residues: Phenylalanine--tRNA ligase beta subunit (566 aa).

The region spanning 287 to 362 is the B5 domain; it reads YFQEEVEFDV…IGEGLASFYP (76 aa). Residues aspartate 340, aspartate 346, glutamate 349, and aspartate 350 each contribute to the Mg(2+) site.

This sequence belongs to the phenylalanyl-tRNA synthetase beta subunit family. Type 2 subfamily. Tetramer of two alpha and two beta subunits. The cofactor is Mg(2+).

It localises to the cytoplasm. It catalyses the reaction tRNA(Phe) + L-phenylalanine + ATP = L-phenylalanyl-tRNA(Phe) + AMP + diphosphate + H(+). This chain is Phenylalanine--tRNA ligase beta subunit, found in Borrelia garinii subsp. bavariensis (strain ATCC BAA-2496 / DSM 23469 / PBi) (Borreliella bavariensis).